The primary structure comprises 775 residues: Homoaconitase, mitochondrial (775 aa).

The transit peptide at 1–29 (MQSRLMPSGGPGRRWAFLRVPSTPQRRAF) directs the protein to the mitochondrion. Residues C392, C461, and C464 each contribute to the [4Fe-4S] cluster site.

It belongs to the aconitase/IPM isomerase family. [4Fe-4S] cluster is required as a cofactor.

Its subcellular location is the mitochondrion. It catalyses the reaction (2R,3S)-homoisocitrate = cis-homoaconitate + H2O. Its pathway is amino-acid biosynthesis; L-lysine biosynthesis via AAA pathway; L-alpha-aminoadipate from 2-oxoglutarate: step 3/5. In terms of biological role, catalyzes the reversible hydration of cis-homoaconitate to (2R,3S)-homoisocitrate, a step in the alpha-aminoadipate pathway for lysine biosynthesis. This Aspergillus oryzae (strain ATCC 42149 / RIB 40) (Yellow koji mold) protein is Homoaconitase, mitochondrial (lys4).